We begin with the raw amino-acid sequence, 287 residues long: Protease HtpX (287 aa).

Helical transmembrane passes span 4-24 (VMLF…VLNI) and 36-56 (LSGL…ISLM). Residue His-143 participates in Zn(2+) binding. Glu-144 is an active-site residue. His-147 contacts Zn(2+). 2 helical membrane passes run 158 to 178 (LMQG…ANIV) and 192 to 212 (MVYF…ASFI). A Zn(2+)-binding site is contributed by Glu-221.

Belongs to the peptidase M48B family. The cofactor is Zn(2+).

Its subcellular location is the cell inner membrane. This is Protease HtpX from Vibrio atlanticus (strain LGP32) (Vibrio splendidus (strain Mel32)).